Here is a 275-residue protein sequence, read N- to C-terminus: Mitochondrial fission factor homolog A (275 aa).

At 1–255 the chain is on the cytoplasmic side; the sequence is MAEVNRIHYE…ENKERAKREM (255 aa). The segment at 100-171 is disordered; sequence DFLEPEPAAN…PLISPEDSQN (72 aa). Basic and acidic residues predominate over residues 114–130; sequence PREEMKSHFRSRREQCR. Over residues 131–142 the composition is skewed to polar residues; it reads SENSTMRRNGQI. Residues 223–253 are a coiled coil; sequence LTDAASLRRQIIKLNRRLQLLEHENKERAKR. The helical; Anchor for type IV membrane protein transmembrane segment at 256–273 threads the bilayer; it reads VMYSLTVAFWLVNSWIWL. At 274-275 the chain is on the extracellular side; the sequence is RR.

Belongs to the Tango11 family.

The protein resides in the mitochondrion outer membrane. The protein localises to the peroxisome. In terms of biological role, plays a role in mitochondrial and peroxisomal fission. Promotes the recruitment and association of the fission mediator dynamin-related protein 1 (DNM1L) to the mitochondrial surface. The polypeptide is Mitochondrial fission factor homolog A (Danio rerio (Zebrafish)).